The primary structure comprises 383 residues: GDSL esterase/lipase At1g28610 (383 aa).

Residues 1-22 form the signal peptide; it reads MASLDSLVSFFLSTLFVTIVSS. S38 (nucleophile) is an active-site residue. 3 N-linked (GlcNAc...) asparagine glycosylation sites follow: N134, N184, and N315. Residues D340 and H343 contribute to the active site.

This sequence belongs to the 'GDSL' lipolytic enzyme family.

Its subcellular location is the secreted. The protein is GDSL esterase/lipase At1g28610 of Arabidopsis thaliana (Mouse-ear cress).